A 101-amino-acid chain; its full sequence is Replication restart protein PriB (101 aa).

One can recognise an SSB domain in the interval 1 to 101 (MTTNNLVLAG…LHAENVELKT (101 aa)).

It belongs to the PriB family. Homodimer. Interacts with PriA and DnaT. Component of the replication restart primosome. Primosome assembly occurs via a 'hand-off' mechanism. PriA binds to replication forks, subsequently PriB then DnaT bind; DnaT then displaces ssDNA to generate the helicase loading substrate.

Its function is as follows. Involved in the restart of stalled replication forks, which reloads the replicative helicase on sites other than the origin of replication; the PriA-PriB pathway is the major replication restart pathway. During primosome assembly it facilitates complex formation between PriA and DnaT on DNA; stabilizes PriA on DNA. Stimulates the DNA unwinding activity of PriA helicase. The polypeptide is Replication restart protein PriB (Shewanella piezotolerans (strain WP3 / JCM 13877)).